Here is a 508-residue protein sequence, read N- to C-terminus: Phosphoenolpyruvate carboxylase (508 aa).

This sequence belongs to the PEPCase type 2 family. In terms of assembly, homotetramer. Mg(2+) serves as cofactor.

The catalysed reaction is oxaloacetate + phosphate = phosphoenolpyruvate + hydrogencarbonate. Functionally, catalyzes the irreversible beta-carboxylation of phosphoenolpyruvate (PEP) to form oxaloacetate (OAA), a four-carbon dicarboxylic acid source for the tricarboxylic acid cycle. This Picrophilus torridus (strain ATCC 700027 / DSM 9790 / JCM 10055 / NBRC 100828 / KAW 2/3) protein is Phosphoenolpyruvate carboxylase.